Consider the following 968-residue polypeptide: Serine/threonine-protein kinase 10 (968 aa).

Residues S13 and S20 each carry the phosphoserine modification. A Protein kinase domain is found at 36–294 (WEIVGELGDG…AAQLLEHPFV (259 aa)). ATP is bound by residues 42 to 50 (LGDGAFGKV) and K65. D157 acts as the Proton acceptor in catalysis. The interval 175-224 (DFGVSAKNLKTLQKRDSFIGTPYWMAPEVVMCETMKDTPYDYKADIWSLG) is activation segment. The residue at position 191 (S191) is a Phosphoserine. 2 stretches are compositionally biased toward polar residues: residues 337–351 (LENHTQNSSEVSPPS) and 361–393 (SPSTPLAPSQSQDSVNEPCSQPSGDRSLQTTSP). Disordered regions lie at residues 337–411 (LENH…VPLR) and 425–490 (AQEK…CSSL). Phosphoserine is present on residues S438, S450, S454, S485, S514, and S549. Polar residues predominate over residues 441 to 457 (ANRSQKASQSRPNSSAL). Residues 573–947 (QKEEHRNQTQ…FFKLSEEAEC (375 aa)) adopt a coiled-coil conformation. Disordered regions lie at residues 668–690 (VEKLPRQQRKESMKQKMEEHTQK), 827–865 (INGGGSAAEQREKIKQFSQQEEKRQKSERLQQQQKHENQ), 910–929 (LKEWRDKLRPRKKALEEDLN), and 944–968 (EAECPNPSTPSKAAKFFPYSSADAS). The segment covering 835 to 865 (EQREKIKQFSQQEEKRQKSERLQQQQKHENQ) has biased composition (basic and acidic residues). T952 carries the phosphothreonine modification.

Belongs to the protein kinase superfamily. STE Ser/Thr protein kinase family. STE20 subfamily. In terms of assembly, homodimer; homodimerization is required for activation segment autophosphorylation. Post-translationally, autophosphorylates following homodimerization, leading to activation of the protein. As to expression, highly expressed in rapidly proliferating tissues (spleen, placenta, and peripheral blood leukocytes). Also expressed in brain, heart, skeletal muscle, colon, thymus, kidney, liver, small intestine and lung.

It localises to the cell membrane. It catalyses the reaction L-seryl-[protein] + ATP = O-phospho-L-seryl-[protein] + ADP + H(+). The enzyme catalyses L-threonyl-[protein] + ATP = O-phospho-L-threonyl-[protein] + ADP + H(+). Inhibited by the pyrrole-indolinone inhibitor SU11274 (K00593): intercalates between the ATP-binding Lys-65 and alpha-C glutamate (Glu-81), resulting in a partial disordering of the lysine side chain. Also specifically inhibited by erlotinib. Slightly inhibited by gefitinib. Its function is as follows. Serine/threonine-protein kinase involved in regulation of lymphocyte migration. Phosphorylates MSN, and possibly PLK1. Involved in regulation of lymphocyte migration by mediating phosphorylation of ERM proteins such as MSN. Acts as a negative regulator of MAP3K1/MEKK1. May also act as a cell cycle regulator by acting as a polo kinase kinase: mediates phosphorylation of PLK1 in vitro; however such data require additional evidences in vivo. This Homo sapiens (Human) protein is Serine/threonine-protein kinase 10 (STK10).